The sequence spans 448 residues: Tubulin beta chain (448 aa).

Gln11, Glu69, Ser138, Gly142, Thr143, Gly144, Asn204, and Asn226 together coordinate GTP. Glu69 contributes to the Mg(2+) binding site. The disordered stretch occupies residues 425–448 (YQDASISEGEEEYLEEEEPLEHEE). Positions 432–448 (EGEEEYLEEEEPLEHEE) are enriched in acidic residues.

Belongs to the tubulin family. As to quaternary structure, dimer of alpha and beta chains. A typical microtubule is a hollow water-filled tube with an outer diameter of 25 nm and an inner diameter of 15 nM. Alpha-beta heterodimers associate head-to-tail to form protofilaments running lengthwise along the microtubule wall with the beta-tubulin subunit facing the microtubule plus end conferring a structural polarity. Microtubules usually have 13 protofilaments but different protofilament numbers can be found in some organisms and specialized cells. The cofactor is Mg(2+).

The protein resides in the cytoplasm. Its subcellular location is the cytoskeleton. Functionally, tubulin is the major constituent of microtubules, a cylinder consisting of laterally associated linear protofilaments composed of alpha- and beta-tubulin heterodimers. Microtubules grow by the addition of GTP-tubulin dimers to the microtubule end, where a stabilizing cap forms. Below the cap, tubulin dimers are in GDP-bound state, owing to GTPase activity of alpha-tubulin. This is Tubulin beta chain (benA56) from Aspergillus oryzae (strain ATCC 42149 / RIB 40) (Yellow koji mold).